The chain runs to 480 residues: Selenium-binding protein 3 (480 aa).

Selenite contacts are provided by Cys12 and Cys13.

Belongs to the selenium-binding protein family. Expressed in young seedlings, mostly in roots.

The sequence is that of Selenium-binding protein 3 (SBP3) from Arabidopsis thaliana (Mouse-ear cress).